A 688-amino-acid chain; its full sequence is Glycine--tRNA ligase beta subunit (688 aa).

The protein belongs to the class-II aminoacyl-tRNA synthetase family. In terms of assembly, tetramer of two alpha and two beta subunits.

The protein resides in the cytoplasm. It carries out the reaction tRNA(Gly) + glycine + ATP = glycyl-tRNA(Gly) + AMP + diphosphate. The polypeptide is Glycine--tRNA ligase beta subunit (Listeria monocytogenes serotype 4b (strain CLIP80459)).